The following is a 483-amino-acid chain: NADH-quinone oxidoreductase subunit N (483 aa).

13 helical membrane passes run 7-27, 33-53, 76-96, 108-128, 161-181, 196-216, 235-255, 272-292, 297-317, 323-343, 369-389, 402-422, and 442-462; these read AILT…LGAV, ALAS…AFYI, FAKI…QDYM, VLII…DLIA, FVLG…AYGF, GGDM…GLAF, PTPI…ALFA, IVAF…IGQT, LMAY…SAGT, AMLI…AFIL, ALAI…LGFF, GLVW…FYYI, and MGLV…LGWV.

It belongs to the complex I subunit 2 family. NDH-1 is composed of 14 different subunits. Subunits NuoA, H, J, K, L, M, N constitute the membrane sector of the complex.

The protein resides in the cell inner membrane. The enzyme catalyses a quinone + NADH + 5 H(+)(in) = a quinol + NAD(+) + 4 H(+)(out). Functionally, NDH-1 shuttles electrons from NADH, via FMN and iron-sulfur (Fe-S) centers, to quinones in the respiratory chain. The immediate electron acceptor for the enzyme in this species is believed to be ubiquinone. Couples the redox reaction to proton translocation (for every two electrons transferred, four hydrogen ions are translocated across the cytoplasmic membrane), and thus conserves the redox energy in a proton gradient. The chain is NADH-quinone oxidoreductase subunit N from Jannaschia sp. (strain CCS1).